We begin with the raw amino-acid sequence, 133 residues long: NAD(P)H-quinone oxidoreductase subunit 3 (133 aa).

3 helical membrane-spanning segments follow: residues Tyr22–Leu44, Met77–Val97, and Leu102–Ala122.

Belongs to the complex I subunit 3 family. NDH-1 can be composed of about 15 different subunits; different subcomplexes with different compositions have been identified which probably have different functions.

Its subcellular location is the cellular thylakoid membrane. It carries out the reaction a plastoquinone + NADH + (n+1) H(+)(in) = a plastoquinol + NAD(+) + n H(+)(out). The catalysed reaction is a plastoquinone + NADPH + (n+1) H(+)(in) = a plastoquinol + NADP(+) + n H(+)(out). Its function is as follows. NDH-1 shuttles electrons from an unknown electron donor, via FMN and iron-sulfur (Fe-S) centers, to quinones in the respiratory and/or the photosynthetic chain. The immediate electron acceptor for the enzyme in this species is believed to be plastoquinone. Couples the redox reaction to proton translocation, and thus conserves the redox energy in a proton gradient. Cyanobacterial NDH-1 also plays a role in inorganic carbon-concentration. This Synechococcus sp. (strain ATCC 27144 / PCC 6301 / SAUG 1402/1) (Anacystis nidulans) protein is NAD(P)H-quinone oxidoreductase subunit 3.